A 316-amino-acid chain; its full sequence is Melanocyte-stimulating hormone receptor (316 aa).

The Extracellular segment spans residues 1 to 37; that stretch reads MPMQGAQRKLLGSLNSTPTATSNLGLAANHTGAPCLE. Asparagine 29 carries an N-linked (GlcNAc...) asparagine glycan. The helical transmembrane segment at 38 to 63 threads the bilayer; it reads VSIPDGLFLSLGLVSLVENVLVVAAI. The Cytoplasmic segment spans residues 64 to 72; it reads AKNRNLHSS. Residues 73–93 form a helical membrane-spanning segment; sequence MYCFICCLALSDLLVSGSNML. At 94–118 the chain is on the extracellular side; sequence ETAVILLLETGALATRTSVVQQLHN. A helical transmembrane segment spans residues 119-140; that stretch reads TINVLTCSSMLCSLCFLGAIAV. Residues 141-163 are Cytoplasmic-facing; the sequence is DRYISIFYALRYHSIMTLPRAQR. The chain crosses the membrane as a helical span at residues 164–183; that stretch reads AIAAIWVASVLSSTLFITYY. The Extracellular portion of the chain corresponds to 184 to 191; the sequence is DHAAVLLC. The helical transmembrane segment at 192–211 threads the bilayer; the sequence is LVVFFLAMLVLMAVLYVHML. Topologically, residues 212-240 are cytoplasmic; sequence ARACQHAHGIIRLHKRQTPAHQAFGLRGA. The chain crosses the membrane as a helical span at residues 241 to 266; the sequence is ATLTILLGIFFLCWGPFFLHLTLVVF. Topologically, residues 267–279 are extracellular; it reads CPQHLTCSCIFKN. A helical membrane pass occupies residues 280-300; that stretch reads FKVFLTLIICNTIIDPLIYAF. At 301 to 316 the chain is on the cytoplasmic side; sequence RSQELRRTLKEVLCSW. Cysteine 314 is lipidated: S-palmitoyl cysteine.

This sequence belongs to the G-protein coupled receptor 1 family. As to quaternary structure, interacts with MGRN1, but does not undergo MGRN1-mediated ubiquitination; this interaction competes with GNAS-binding and thus inhibits agonist-induced cAMP production. Interacts with OPN3; the interaction results in a decrease in MC1R-mediated cAMP signaling and ultimately a decrease in melanin production in melanocytes.

The protein localises to the cell membrane. Receptor for MSH (alpha, beta and gamma) and ACTH. The activity of this receptor is mediated by G proteins which activate adenylate cyclase. Mediates melanogenesis, the production of eumelanin (black/brown) and phaeomelanin (red/yellow), via regulation of cAMP signaling in melanocytes. This Saguinus geoffroyi (Geoffroy's tamarin) protein is Melanocyte-stimulating hormone receptor (MC1R).